A 423-amino-acid chain; its full sequence is Putative UPF0496 protein 5 (423 aa).

The segment covering Met1–Ala14 has biased composition (basic residues). Positions Met1–Cys37 are disordered. 2 helical membrane-spanning segments follow: residues Ile224–Ala244 and Pro247–Met267.

Belongs to the UPF0496 family.

It is found in the membrane. The polypeptide is Putative UPF0496 protein 5 (Oryza sativa subsp. japonica (Rice)).